The sequence spans 89 residues: Small ribosomal subunit protein uS14 (89 aa).

This sequence belongs to the universal ribosomal protein uS14 family. As to quaternary structure, part of the 30S ribosomal subunit. Contacts proteins S3 and S10.

In terms of biological role, binds 16S rRNA, required for the assembly of 30S particles and may also be responsible for determining the conformation of the 16S rRNA at the A site. The sequence is that of Small ribosomal subunit protein uS14 from Leuconostoc citreum (strain KM20).